The sequence spans 393 residues: Elongation factor Tu (393 aa).

Positions 10–203 constitute a tr-type G domain; sequence KPHVNIGTIG…AVDAFIPDPV (194 aa). Positions 19–26 are G1; that stretch reads GHVDHGKT. GTP is bound at residue 19–26; sequence GHVDHGKT. Residue Thr-26 coordinates Mg(2+). Positions 60-64 are G2; the sequence is GITIS. Positions 81-84 are G3; that stretch reads DCPG. GTP contacts are provided by residues 81-85 and 136-139; these read DCPGH and NKVD. Positions 136–139 are G4; sequence NKVD. Positions 173–175 are G5; it reads SAL.

It belongs to the TRAFAC class translation factor GTPase superfamily. Classic translation factor GTPase family. EF-Tu/EF-1A subfamily. Monomer.

The protein localises to the cytoplasm. It carries out the reaction GTP + H2O = GDP + phosphate + H(+). In terms of biological role, GTP hydrolase that promotes the GTP-dependent binding of aminoacyl-tRNA to the A-site of ribosomes during protein biosynthesis. The sequence is that of Elongation factor Tu from Chlorobium chlorochromatii (strain CaD3).